A 400-amino-acid polypeptide reads, in one-letter code: Phosphoglycerate kinase (400 aa).

Substrate is bound by residues 21-23 (DFN), arginine 36, 59-62 (HCSR), arginine 118, and arginine 151. ATP-binding positions include lysine 201, glutamate 323, and 353–356 (GGDT).

Belongs to the phosphoglycerate kinase family. In terms of assembly, monomer.

It is found in the cytoplasm. It carries out the reaction (2R)-3-phosphoglycerate + ATP = (2R)-3-phospho-glyceroyl phosphate + ADP. It functions in the pathway carbohydrate degradation; glycolysis; pyruvate from D-glyceraldehyde 3-phosphate: step 2/5. This is Phosphoglycerate kinase from Bartonella bacilliformis (strain ATCC 35685 / KC583 / Herrer 020/F12,63).